The primary structure comprises 109 residues: Cell division suppressor protein YneA (109 aa).

Residues 39–90 (SEVDVNEGDSIWALADQYAAKSDMAKADFVSWVEKENNLTDGHVKAGDYVVI) enclose the LysM domain.

Belongs to the YneA family.

The protein localises to the cytoplasm. Functionally, inhibits cell division during the SOS response. Affects a later stage of the cell division protein assembly, after the assembly of the Z ring, by probably suppressing recruitment of FtsL and/or DivIC to the division machinery. The protein is Cell division suppressor protein YneA of Listeria innocua serovar 6a (strain ATCC BAA-680 / CLIP 11262).